The primary structure comprises 134 residues: Putative oxidoreductase CatD (134 aa).

4 consecutive transmembrane segments (helical) span residues 5–25, 46–66, 70–90, and 91–111; these read FEIG…VHGL, FMAY…FFGL, IVGV…KLKA, and PFMG…HLAL.

The protein belongs to the DoxX family.

The protein resides in the cell membrane. Its function is as follows. Essential for growth and viability in the presence of catechol and probably involved in the detoxification of catechol. This is Putative oxidoreductase CatD (catD) from Bacillus subtilis (strain 168).